The primary structure comprises 528 residues: Probable histone-arginine methyltransferase 1.4 (528 aa).

N-acetylmethionine is present on M1. An SAM-dependent MTase PRMT-type domain is found at 144 to 459 (EAASAKMYFH…QSYTINLTLS (316 aa)). Residues Q161, R170, G194, E216, and E246 each contribute to the S-adenosyl-L-methionine site. Residues E260 and E269 contribute to the active site. T274 lines the S-adenosyl-L-methionine pocket.

This sequence belongs to the class I-like SAM-binding methyltransferase superfamily. Protein arginine N-methyltransferase family.

It is found in the nucleus. The protein localises to the cytoplasm. The catalysed reaction is L-arginyl-[protein] + 2 S-adenosyl-L-methionine = N(omega),N(omega)-dimethyl-L-arginyl-[protein] + 2 S-adenosyl-L-homocysteine + 2 H(+). Methylates (mono- and asymmetric dimethylation) the guanidino nitrogens of arginyl residues in several proteins involved in DNA packaging, transcription regulation, and mRNA stability. Recruited to promoters upon gene activation, methylates histone H3 and activates transcription via chromatin remodeling. This is Probable histone-arginine methyltransferase 1.4 (PRMT14) from Arabidopsis thaliana (Mouse-ear cress).